The chain runs to 266 residues: Putative transmembrane ascorbate-dependent reductase CYB561 homolog (266 aa).

Topologically, residues 1–22 (MSLLFDPGFVILREDQSVKLFN) are cytoplasmic. The helical transmembrane segment at 23-43 (IILVMSQVFGGLAVLLVTIWM) threads the bilayer. The Cytochrome b561 domain maps to 27–240 (MSQVFGGLAV…YTVCVLLLVL (214 aa)). The Vesicular segment spans residues 44–61 (SKFESGFAWNEDPDKEFN). Residues 62–82 (YHPTFMIMGMVFLFGEALLVY) form a helical membrane-spanning segment. Residues histidine 63, arginine 83, and lysine 90 each coordinate heme b. Over 83 to 95 (RVFRNERKKFSKT) the chain is Cytoplasmic. Lysine 90 and lysine 94 together coordinate L-ascorbate. Residues 96–116 (LHVILHSCVLVFMLMALKAVF) form a helical membrane-spanning segment. Residues histidine 97, 134 to 137 (NLVS), and histidine 139 contribute to the heme b site. The Vesicular portion of the chain corresponds to 117-141 (DYHNLHKDPSGNPAPIVNLVSLHSW). Residues 142–162 (IGLSVVILYFAQYIVGFITYF) form a helical membrane-spanning segment. Over 163 to 176 (FPGMPIPIRQLVMP) the chain is Cytoplasmic. Arginine 171 is a binding site for L-ascorbate. A helical membrane pass occupies residues 177–197 (FHQMFGVLIFIFVSITVAMGI). Residues histidine 178 and glutamate 199 each contribute to the heme b site. Over 198–219 (SERAAWKHTCWTKEGQMCAQQA) the chain is Vesicular. Residues 220 to 240 (TSSFVGVFTFLYTVCVLLLVL) traverse the membrane as a helical segment. Topologically, residues 241–266 (NPRWKRQSLPEEEGLHHLTSSHSMSD) are cytoplasmic. Residue lysine 245 participates in heme b binding.

Heme b serves as cofactor.

Its subcellular location is the membrane. The catalysed reaction is monodehydro-L-ascorbate radical(out) + L-ascorbate(in) = monodehydro-L-ascorbate radical(in) + L-ascorbate(out). Its function is as follows. Putative transmembrane reductase that uses ascorbate as an electron donor in the cytoplasm and transfers electrons across membranes to reduce monodehydro-L-ascorbate radical in the lumen of secretory vesicles. The polypeptide is Putative transmembrane ascorbate-dependent reductase CYB561 homolog (Caenorhabditis elegans).